The primary structure comprises 258 residues: SMH class II histocompatibility antigen, beta-1 chain (258 aa).

The signal sequence occupies residues 1–29 (MMVLPVPVAPWTAALTVLLMVLNKSVVQG). The interval 30–121 (RTTPENYLFR…LNQRLSQSLI (92 aa)) is beta-1. At 30 to 225 (RTTPENYLFR…RAQSDSARNK (196 aa)) the chain is on the extracellular side. Intrachain disulfides connect Cys-44–Cys-106 and Cys-144–Cys-200. Residues 122–215 (AQPKVHVSPS…SLDRPITVEW (94 aa)) form a beta-2 region. The 89-residue stretch at 124–212 (PKVHVSPSKG…EHPSLDRPIT (89 aa)) folds into the Ig-like C1-type domain. The interval 216–225 (RAQSDSARNK) is connecting peptide. N-linked (GlcNAc...) asparagine glycosylation occurs at Asn-224. Residues 226–246 (TLTGVGGLVLGLIFLAVGLIM) form a helical membrane-spanning segment. The Cytoplasmic segment spans residues 247 to 258 (HVRSKKAQRGSR).

It belongs to the MHC class II family.

The protein localises to the membrane. The chain is SMH class II histocompatibility antigen, beta-1 chain from Spalax ehrenbergi (Middle East blind mole rat).